Consider the following 545-residue polypeptide: Hsk1-interacting molecule 1 (545 aa).

The DBF4-type zinc finger occupies 492 to 541; it reads VDAKPGYCENCREKFDNFESHIRSSRHRRFAENNDNFKDLDELFALVQRP. Zn(2+) contacts are provided by C499, C502, H512, and H518.

Associates with hsk1. Interacts with mcm10. Post-translationally, hyperphosphorylated at the G1/S and S-phases of the cell cycle.

The protein resides in the nucleus. Functionally, activates hsk1 kinase and is essential for G1/S transition. Has a role in S-phase checkpoint control induced by replication fork blocks after nucleotide deprivation and DNA damage. The sequence is that of Hsk1-interacting molecule 1 (him1) from Schizosaccharomyces pombe (strain 972 / ATCC 24843) (Fission yeast).